Consider the following 690-residue polypeptide: Elongation factor G (690 aa).

The tr-type G domain occupies 8–283 (EDYRNFGIMA…AVVDYLPSPL (276 aa)). GTP-binding positions include 17–24 (AHIDAGKT), 81–85 (DTPGH), and 135–138 (NKMD).

The protein belongs to the TRAFAC class translation factor GTPase superfamily. Classic translation factor GTPase family. EF-G/EF-2 subfamily.

It localises to the cytoplasm. Functionally, catalyzes the GTP-dependent ribosomal translocation step during translation elongation. During this step, the ribosome changes from the pre-translocational (PRE) to the post-translocational (POST) state as the newly formed A-site-bound peptidyl-tRNA and P-site-bound deacylated tRNA move to the P and E sites, respectively. Catalyzes the coordinated movement of the two tRNA molecules, the mRNA and conformational changes in the ribosome. The sequence is that of Elongation factor G from Rhodopseudomonas palustris (strain ATCC BAA-98 / CGA009).